The chain runs to 290 residues: Purine nucleoside phosphorylase (290 aa).

Residue 68–69 (RN) participates in phosphate binding. Met204 contacts substrate. Thr205 is a binding site for phosphate.

This sequence belongs to the PNP/MTAP phosphorylase family. MTAP subfamily. As to quaternary structure, homotrimer.

Its subcellular location is the cytoplasm. It localises to the nucleus. It carries out the reaction a purine D-ribonucleoside + phosphate = a purine nucleobase + alpha-D-ribose 1-phosphate. It functions in the pathway purine metabolism; purine nucleoside salvage. Purine nucleoside phosphorylase involved in purine salvage. This is Purine nucleoside phosphorylase from Drosophila melanogaster (Fruit fly).